The chain runs to 359 residues: MSIKKLFAETFLAWMNGETASQSDIVISSRVRLARNLSDIAFPHLLNQESGQKFMQLIYEAWQKSEFKELKQMELVTFENLSALDRKILVEKHLISPNHAQSTAFYQGLLVKPDGSLAVMINEEDHLRIQCFLPGLQLEEAYRRAQEIDDALEKELDFAFDDRRGYLTSCPTNIGTGMRASLMLHLPAITISGQSGHIFQNLNQLGLTVRGIYGEGTEAIGNFFQLSNQITLGQSEEDINASLTTISQQVIEQERMLRKSLREQMKYQLEDRIGRAYGILTHARLISSNEALTLLSDVRLGVDMGMIPRISPNALNELVVDIRPAHLQKKAGSDMDAVSRDAKRAEVIREKLQTGEEGS.

Residues isoleucine 25–leucine 257 enclose the Phosphagen kinase C-terminal domain. Residues serine 28–arginine 32, histidine 93, arginine 128, arginine 179–methionine 183, and arginine 210–glutamate 215 each bind ATP. The short motif at arginine 340–alanine 345 is the RDXXRA motif of the pArg binding pocket involved in allosteric regulation element.

The protein belongs to the ATP:guanido phosphotransferase family.

It carries out the reaction L-arginyl-[protein] + ATP = N(omega)-phospho-L-arginyl-[protein] + ADP + H(+). Its activity is regulated as follows. Appears to be allosterically activated by the binding of pArg-containing polypeptides to the pArg-binding pocket localized in the C-terminal domain of McsB. Catalyzes the specific phosphorylation of arginine residues in proteins. This is Protein-arginine kinase from Syntrophomonas wolfei subsp. wolfei (strain DSM 2245B / Goettingen).